The chain runs to 1657 residues: Ras GTPase-activating-like protein IQGAP1 (1657 aa).

Ser-2 bears the N-acetylserine mark. Ser-2 bears the Phosphoserine mark. Residues 44 to 159 (LCHLEEAKRW…YCIHALSLYL (116 aa)) form the Calponin-homology (CH) domain. A Phosphotyrosine modification is found at Tyr-172. Residue Ser-330 is modified to Phosphoserine. The WW domain occupies 679-712 (GDNNSKWVKHWVKGGYYYYHNLETQEGGWDEPPN). IQ domains lie at 745–774 (NEGL…FLKK), 775–804 (QIPA…YLRS), 805–834 (HKDE…YFRD), and 835–864 (HIND…AEDP). The segment at 956-1274 (GGLKALSKEK…FFQTACDVPE (319 aa)) is C1. The Ras-GAP domain occupies 1020-1269 (YLLLRLFKTA…QKFRRFFQTA (250 aa)). A C2 region spans residues 1276-1657 (QDKFNVDEYS…FLLNKKFYGK (382 aa)). The tract at residues 1410 to 1448 (TPATSEQEAEHQRAMQRRAIRDAKTPDKMKKSKSVKEDS) is disordered. Over residues 1417 to 1448 (EAEHQRAMQRRAIRDAKTPDKMKKSKSVKEDS) the composition is skewed to basic and acidic residues. A Phosphoserine; by PKC modification is found at Ser-1441. Ser-1443 carries the post-translational modification Phosphoserine; by PKC/PRKCE.

Interacts with CDC42; the interaction is demonstrated with IQGAP1 in GTP-bound and in nucleotide-free state. Interacts with RAC1. Does not interact with RHOA. Interacts with TSG101. Interacts with PAK6. Interacts with TMEM14B; this interaction increases IQGAP1 phosphorylation and induces its nuclear translocation. Interacts with SASH1. Interacts with PJVK. Interacts with SLC26A4; this interaction enhances the chloride-bicarbonate exchange activity of SLC26A4. Interacts with SVEP1. Interacts with ILK; the interaction is required for localization of IQGAP to the cell cortex. As to quaternary structure, (Microbial infection) Interacts with ebolavirus vp40. In terms of assembly, (Microbial infection) Interacts with human cytomegalovirus protein UL5. (Microbial infection) Interacts with C.jejuni invasion antigen D (CiaD). Phosphorylation of Ser-1443 by PKC/PRKCE prevents interaction between C1 and C2, allowing binding of nucleotide-free CDC42. Ser-1443 phosphorylation enhances the ability to promote neurite outgrowth. In terms of tissue distribution, expressed in the placenta, lung, and kidney. A lower level expression is seen in the heart, liver, skeletal muscle and pancreas.

The protein resides in the cell membrane. The protein localises to the nucleus. Its subcellular location is the cytoplasm. It localises to the cell cortex. It is found in the apical cell membrane. The protein resides in the basolateral cell membrane. Functionally, plays a crucial role in regulating the dynamics and assembly of the actin cytoskeleton. Recruited to the cell cortex by interaction with ILK which allows it to cooperate with its effector DIAPH1 to locally stabilize microtubules and allow stable insertion of caveolae into the plasma membrane. Binds to activated CDC42 but does not stimulate its GTPase activity. Associates with calmodulin. May promote neurite outgrowth. May play a possible role in cell cycle regulation by contributing to cell cycle progression after DNA replication arrest. The protein is Ras GTPase-activating-like protein IQGAP1 (IQGAP1) of Homo sapiens (Human).